The primary structure comprises 429 residues: Argininosuccinate lyase (429 aa).

It belongs to the lyase 1 family. Argininosuccinate lyase subfamily.

It localises to the cytoplasm. The enzyme catalyses 2-(N(omega)-L-arginino)succinate = fumarate + L-arginine. The protein operates within amino-acid biosynthesis; L-arginine biosynthesis; L-arginine from L-ornithine and carbamoyl phosphate: step 3/3. The polypeptide is Argininosuccinate lyase (Pyrobaculum calidifontis (strain DSM 21063 / JCM 11548 / VA1)).